The chain runs to 501 residues: Putative zinc metalloprotease TM_0890 (501 aa).

Position 17 (H17) interacts with Zn(2+). E18 is a catalytic residue. Position 21 (H21) interacts with Zn(2+). 4 helical membrane-spanning segments follow: residues 93–115, 401–420, 427–449, and 474–496; these read FLIT…LPIT, VQTG…SAAS, VLTV…LPAL, and IIHF…LDIG. Residues 96-180 enclose the PDZ domain; the sequence is TLAGPLFSIL…LVIIRNGEKK (85 aa).

It belongs to the peptidase M50B family. Zn(2+) serves as cofactor.

The protein localises to the cell inner membrane. In Thermotoga maritima (strain ATCC 43589 / DSM 3109 / JCM 10099 / NBRC 100826 / MSB8), this protein is Putative zinc metalloprotease TM_0890.